Here is a 645-residue protein sequence, read N- to C-terminus: 1,4-alpha-glucan branching enzyme GlgB (645 aa).

Asp309 (nucleophile) is an active-site residue. The active-site Proton donor is Glu352. The disordered stretch occupies residues 619–645 (VKTRKGSKKQDGSKTKVRSNVTSRGKR). A compositionally biased stretch (polar residues) spans 636–645 (RSNVTSRGKR).

Belongs to the glycosyl hydrolase 13 family. GlgB subfamily. As to quaternary structure, monomer.

It catalyses the reaction Transfers a segment of a (1-&gt;4)-alpha-D-glucan chain to a primary hydroxy group in a similar glucan chain.. Its pathway is glycan biosynthesis; glycogen biosynthesis. Its function is as follows. Catalyzes the formation of the alpha-1,6-glucosidic linkages in glycogen by scission of a 1,4-alpha-linked oligosaccharide from growing alpha-1,4-glucan chains and the subsequent attachment of the oligosaccharide to the alpha-1,6 position. The polypeptide is 1,4-alpha-glucan branching enzyme GlgB (Bacillus cereus (strain 03BB102)).